Here is a 225-residue protein sequence, read N- to C-terminus: THAP domain-containing protein 1 A (225 aa).

Residues 5–57 (CSAYGCKNRYDKDKPISFHKFPLKRPLLCKKWEAAVRRAEFKPTKYSSICSDH) form a THAP-type zinc finger. The stretch at 139–194 (VEDTVHQRRRIQQLEEQVDKLRKKLKIANQKCRRQERSLEKLEREVSEYREAKGSG) forms a coiled coil.

It belongs to the THAP1 family.

The protein resides in the nucleus. Its subcellular location is the nucleoplasm. Functionally, DNA-binding transcription regulator that regulates endothelial cell proliferation and G1/S cell-cycle progression. Specifically binds the 5'-[AT]NTNN[GT]GGCA[AGT]-3' core DNA sequence and acts by modulating expression of pRB-E2F cell-cycle target genes. The chain is THAP domain-containing protein 1 A (thap1-a) from Xenopus laevis (African clawed frog).